Consider the following 263-residue polypeptide: Purine nucleoside phosphorylase SE_0862 (263 aa).

Zn(2+)-binding residues include His79, Cys124, and His141.

It belongs to the purine nucleoside phosphorylase YfiH/LACC1 family. Homodimer. Requires Cu(2+) as cofactor. Zn(2+) is required as a cofactor.

It catalyses the reaction adenosine + phosphate = alpha-D-ribose 1-phosphate + adenine. The catalysed reaction is S-methyl-5'-thioadenosine + phosphate = 5-(methylsulfanyl)-alpha-D-ribose 1-phosphate + adenine. The enzyme catalyses inosine + phosphate = alpha-D-ribose 1-phosphate + hypoxanthine. It carries out the reaction adenosine + H2O + H(+) = inosine + NH4(+). Purine nucleoside enzyme that catalyzes the phosphorolysis of adenosine and inosine nucleosides, yielding D-ribose 1-phosphate and the respective free bases, adenine and hypoxanthine. Also catalyzes the phosphorolysis of S-methyl-5'-thioadenosine into adenine and S-methyl-5-thio-alpha-D-ribose 1-phosphate. Also has adenosine deaminase activity. The chain is Purine nucleoside phosphorylase SE_0862 from Staphylococcus epidermidis (strain ATCC 12228 / FDA PCI 1200).